Reading from the N-terminus, the 410-residue chain is Riboflavin biosynthesis protein RibBA (410 aa).

Residues 1–205 (MENKRIDTIE…IKDLVAFQMR (205 aa)) form a DHBP synthase region. Residues 30 to 31 (RE), D35, 144 to 148 (RVGHT), and E168 each bind D-ribulose 5-phosphate. E31 contacts Mg(2+). H147 contributes to the Mg(2+) binding site. Residues 206-410 (RSKLVQRAVE…ISCSCGSGNH (205 aa)) form a GTP cyclohydrolase II region. 256–260 (RVHSQ) contacts GTP. Residues C261, C272, and C274 each coordinate Zn(2+). GTP-binding positions include Q277, 299–301 (EGR), and T321. D333 (proton acceptor; for GTP cyclohydrolase activity) is an active-site residue. R335 functions as the Nucleophile; for GTP cyclohydrolase activity in the catalytic mechanism. 2 residues coordinate GTP: T356 and K361.

The protein in the N-terminal section; belongs to the DHBP synthase family. In the C-terminal section; belongs to the GTP cyclohydrolase II family. Mg(2+) serves as cofactor. It depends on Mn(2+) as a cofactor. Requires Zn(2+) as cofactor.

The enzyme catalyses D-ribulose 5-phosphate = (2S)-2-hydroxy-3-oxobutyl phosphate + formate + H(+). The catalysed reaction is GTP + 4 H2O = 2,5-diamino-6-hydroxy-4-(5-phosphoribosylamino)-pyrimidine + formate + 2 phosphate + 3 H(+). It functions in the pathway cofactor biosynthesis; riboflavin biosynthesis; 2-hydroxy-3-oxobutyl phosphate from D-ribulose 5-phosphate: step 1/1. Its pathway is cofactor biosynthesis; riboflavin biosynthesis; 5-amino-6-(D-ribitylamino)uracil from GTP: step 1/4. In terms of biological role, catalyzes the conversion of D-ribulose 5-phosphate to formate and 3,4-dihydroxy-2-butanone 4-phosphate. Functionally, catalyzes the conversion of GTP to 2,5-diamino-6-ribosylamino-4(3H)-pyrimidinone 5'-phosphate (DARP), formate and pyrophosphate. The sequence is that of Riboflavin biosynthesis protein RibBA from Chlorobium phaeovibrioides (strain DSM 265 / 1930) (Prosthecochloris vibrioformis (strain DSM 265)).